Here is a 101-residue protein sequence, read N- to C-terminus: Urease subunit beta (101 aa).

Belongs to the urease beta subunit family. In terms of assembly, heterotrimer of UreA (gamma), UreB (beta) and UreC (alpha) subunits. Three heterotrimers associate to form the active enzyme.

The protein resides in the cytoplasm. The enzyme catalyses urea + 2 H2O + H(+) = hydrogencarbonate + 2 NH4(+). The protein operates within nitrogen metabolism; urea degradation; CO(2) and NH(3) from urea (urease route): step 1/1. The sequence is that of Urease subunit beta from Rhizobium meliloti (strain 1021) (Ensifer meliloti).